Consider the following 335-residue polypeptide: Probable G-protein coupled receptor 174 (335 aa).

The Extracellular segment spans residues 1 to 27; it reads MTDNFTCNKTDGDNTDFRYFIYAVTYT. N4 and N8 each carry an N-linked (GlcNAc...) asparagine glycan. The chain crosses the membrane as a helical span at residues 28 to 48; the sequence is VILVPGLIGNILALWVFYGYM. The Cytoplasmic portion of the chain corresponds to 49-53; it reads KETKR. The helical transmembrane segment at 54-74 threads the bilayer; it reads AVVFMINLAIADLLQILSLPL. Over 75–91 the chain is Extracellular; sequence RIFYYLNHDWPFGPGLC. Residues C91 and C168 are joined by a disulfide bond. Residues 92-112 traverse the membrane as a helical segment; sequence MFCFYLKYVNMYASIYFLVCI. Residues 113–134 are Cytoplasmic-facing; that stretch reads SVRRFWFLMYPFRFNDCKQKYD. Residues 135–155 traverse the membrane as a helical segment; the sequence is LYISIIGWLIICLACLLFPLL. The Extracellular portion of the chain corresponds to 156–182; that stretch reads RTNDDTPGNRTKCFVDLPIRNVNLAQS. N164 carries N-linked (GlcNAc...) asparagine glycosylation. Residues 183 to 203 traverse the membrane as a helical segment; it reads VAMITIGEVVGFVTPLMIVLY. Residues 204-231 lie on the Cytoplasmic side of the membrane; sequence CTWKTALSLQNKYPISQHLGEKKKALKM. Residues 232 to 252 form a helical membrane-spanning segment; the sequence is ILTCAGVFLVCFVPYHFSFPL. Residues 253–268 lie on the Extracellular side of the membrane; it reads DFLVKSNEIKSCFARR. A helical transmembrane segment spans residues 269–289; that stretch reads VILIFHSVALCLASLNSCLDP. Residues 290-335 lie on the Cytoplasmic side of the membrane; sequence VIYYFTTNEFRRRLSRQDLPDNIQLHTKSYKIASNHATSTVAAELC.

It belongs to the G-protein coupled receptor 1 family. Interacts with GNA13. Interacts with CCL21. As to expression, expressed in spleen and, at low levels, in brain. Highly expressed in developing and mature regulatory T-cells.

The protein resides in the cell membrane. In terms of biological role, G-protein-coupled receptor of lysophosphatidylserine (LysoPS) that plays different roles in immune response. Plays a negative role in regulatory T-cell accumulation and homeostasis. Under inflammatory conditions where LysoPS production increases, contributes to the down-regulation of regulatory T-cell activity to favor effector response. Mediates the suppression of IL-2 production in activated T-lymphocytes leading to inhibition of growth, proliferation and differentiation of T-cells. Mechanistically, acts via G(s)-containing heterotrimeric G proteins to trigger elevated cyclic AMP levels and protein kinase A/PKA activity, which may in turn act to antagonize proximal TCR signaling. Plays an important role in the initial period of sepsis through the regulation of macrophage polarization and pro- and anti-inflammatory cytokine secretions. Upon testosterone treatment, acts as a receptor for CCL21 and subsequently triggers through G(q)-alpha and G(12)/G(13) proteins a calcium flux leading to chemotactic effects on activated B-cells. Signals via GNA13 and PKA to promote CD86 up-regulation by follicular B-cells. The sequence is that of Probable G-protein coupled receptor 174 (Gpr174) from Mus musculus (Mouse).